A 429-amino-acid chain; its full sequence is Histidine--tRNA ligase (429 aa).

This sequence belongs to the class-II aminoacyl-tRNA synthetase family. Homodimer.

It localises to the cytoplasm. The enzyme catalyses tRNA(His) + L-histidine + ATP = L-histidyl-tRNA(His) + AMP + diphosphate + H(+). This Alkalilimnicola ehrlichii (strain ATCC BAA-1101 / DSM 17681 / MLHE-1) protein is Histidine--tRNA ligase.